We begin with the raw amino-acid sequence, 349 residues long: Eukaryotic translation initiation factor 3 subunit I (349 aa).

WD repeat units lie at residues 8–49, 51–91, 93–135, 148–187, 197–239, and 295–336; these read GHER…GTLE, HIGT…QSWE, PTPV…DYTK, SDAKKVTVAGWSANGDFIIAGHEDGYVSKYNSSTGEFIET, EKIA…KVYK, and GHFG…FEFD.

The protein belongs to the eIF-3 subunit I family. Component of the eukaryotic translation initiation factor 3 (eIF-3) complex.

The protein localises to the cytoplasm. Component of the eukaryotic translation initiation factor 3 (eIF-3) complex, which is involved in protein synthesis of a specialized repertoire of mRNAs and, together with other initiation factors, stimulates binding of mRNA and methionyl-tRNAi to the 40S ribosome. The eIF-3 complex specifically targets and initiates translation of a subset of mRNAs involved in cell proliferation. The polypeptide is Eukaryotic translation initiation factor 3 subunit I (Debaryomyces hansenii (strain ATCC 36239 / CBS 767 / BCRC 21394 / JCM 1990 / NBRC 0083 / IGC 2968) (Yeast)).